A 529-amino-acid polypeptide reads, in one-letter code: Bifunctional purine biosynthesis protein PurH (529 aa).

An MGS-like domain is found at 1 to 148 (MQQRRPVRRA…KNHKDVAIVV (148 aa)). N6-acetyllysine is present on lysine 287.

Belongs to the PurH family.

The catalysed reaction is (6R)-10-formyltetrahydrofolate + 5-amino-1-(5-phospho-beta-D-ribosyl)imidazole-4-carboxamide = 5-formamido-1-(5-phospho-D-ribosyl)imidazole-4-carboxamide + (6S)-5,6,7,8-tetrahydrofolate. It carries out the reaction IMP + H2O = 5-formamido-1-(5-phospho-D-ribosyl)imidazole-4-carboxamide. It participates in purine metabolism; IMP biosynthesis via de novo pathway; 5-formamido-1-(5-phospho-D-ribosyl)imidazole-4-carboxamide from 5-amino-1-(5-phospho-D-ribosyl)imidazole-4-carboxamide (10-formyl THF route): step 1/1. Its pathway is purine metabolism; IMP biosynthesis via de novo pathway; IMP from 5-formamido-1-(5-phospho-D-ribosyl)imidazole-4-carboxamide: step 1/1. The chain is Bifunctional purine biosynthesis protein PurH from Escherichia coli O8 (strain IAI1).